The sequence spans 345 residues: 3'-5' exoribonuclease 1 (345 aa).

Basic and acidic residues-rich tracts occupy residues 1 to 11 and 19 to 40; these read MEDERGREHGG and PRPECEESRPLSVEKKQRCRLD. A disordered region spans residues 1–40; the sequence is MEDERGREHGGDAAQQKTPRPECEESRPLSVEKKQRCRLD. S58 is subject to Phosphoserine. Positions 72 to 106 constitute an SAP domain; that stretch reads INRMSKEELRAKLSEFKLETRGVKDVLKKRLKNYY. The Exonuclease domain occupies 126 to 302; that stretch reads ICIIDFEATC…DDSKNIARIA (177 aa). Residues D130 and E132 each coordinate Mg(2+). The active-site Proton acceptor is the E132. AMP-binding residues include E132 and A133. D230 serves as a coordination point for Mg(2+). The active-site Proton acceptor is the H289. H289 serves as a coordination point for AMP. Mg(2+) is bound at residue D294.

In terms of assembly, identified in a histone pre-mRNA complex, at least composed of ERI1, LSM11, SLBP, SNRPB, SYNCRIP and YBX1. Binds to 40S and 60S ribosomal subunits and to 80S assembled ribosomes. Interacts in a cooperative manner with SLBP to the mature 3'-end of histone mRNAs. Found in a ternary complex with SLBP and the stem-loop structure of the 3'-end of histone mRNAs. It depends on Mg(2+) as a cofactor.

It localises to the cytoplasm. Its subcellular location is the nucleus. It is found in the nucleolus. The enzyme catalyses Exonucleolytic cleavage in the 3'- to 5'-direction to yield nucleoside 5'-phosphates.. With respect to regulation, although it can bind simultaneously with SLBP to the 3'-end of histone mRNA, the presence of SLBP prevents the exonuclease activity. In terms of biological role, RNA exonuclease that binds to the 3'-end of histone mRNAs and degrades them, suggesting that it plays an essential role in histone mRNA decay after replication. A 2' and 3'-hydroxyl groups at the last nucleotide of the histone 3'-end is required for efficient 3'-end histone mRNA exonuclease activity and degradation of RNA substrates. Also able to degrade the 3'-overhangs of short interfering RNAs (siRNAs) in vitro, suggesting a possible role as regulator of RNA interference (RNAi). Required for binding the 5'-ACCCA-3' sequence present in stem-loop structure. Able to bind other mRNAs. Required for 5.8S rRNA 3'-end processing. Also binds to 5.8s ribosomal RNA. Binds with high affinity to the stem-loop structure of replication-dependent histone pre-mRNAs. In vitro, does not have sequence specificity. In vitro, has weak DNA exonuclease activity. In vitro, shows biphasic kinetics such that there is rapid hydrolysis of the last three unpaired RNA nucleotides in the 39 flanking sequence followed by a much slower cleavage through the stem that occurs over a longer incubation period in the order of hours. ERI1-mediated RNA metabolism plays a key role in chondrogenesis. This Rattus norvegicus (Rat) protein is 3'-5' exoribonuclease 1 (Eri1).